A 119-amino-acid chain; its full sequence is Holo-[acyl-carrier-protein] synthase (119 aa).

The Mg(2+) site is built by Asp-8 and Glu-50.

The protein belongs to the P-Pant transferase superfamily. AcpS family. The cofactor is Mg(2+).

The protein localises to the cytoplasm. It catalyses the reaction apo-[ACP] + CoA = holo-[ACP] + adenosine 3',5'-bisphosphate + H(+). Transfers the 4'-phosphopantetheine moiety from coenzyme A to a Ser of acyl-carrier-protein. The sequence is that of Holo-[acyl-carrier-protein] synthase from Clavibacter sepedonicus (Clavibacter michiganensis subsp. sepedonicus).